A 180-amino-acid chain; its full sequence is Large ribosomal subunit protein uL5 (180 aa).

It belongs to the universal ribosomal protein uL5 family. As to quaternary structure, part of the 50S ribosomal subunit; part of the 5S rRNA/L5/L18/L25 subcomplex. Contacts the 5S rRNA and the P site tRNA. Forms a bridge to the 30S subunit in the 70S ribosome.

In terms of biological role, this is one of the proteins that bind and probably mediate the attachment of the 5S RNA into the large ribosomal subunit, where it forms part of the central protuberance. In the 70S ribosome it contacts protein S13 of the 30S subunit (bridge B1b), connecting the 2 subunits; this bridge is implicated in subunit movement. Contacts the P site tRNA; the 5S rRNA and some of its associated proteins might help stabilize positioning of ribosome-bound tRNAs. In Ralstonia nicotianae (strain ATCC BAA-1114 / GMI1000) (Ralstonia solanacearum), this protein is Large ribosomal subunit protein uL5.